The following is a 445-amino-acid chain: Probable D-serine dehydratase (445 aa).

Lysine 111 carries the post-translational modification N6-(pyridoxal phosphate)lysine.

This sequence belongs to the serine/threonine dehydratase family. DsdA subfamily. The cofactor is pyridoxal 5'-phosphate.

The enzyme catalyses D-serine = pyruvate + NH4(+). This Burkholderia pseudomallei (strain 1106a) protein is Probable D-serine dehydratase.